Here is a 660-residue protein sequence, read N- to C-terminus: Bifunctional polymyxin resistance protein ArnA (660 aa).

Positions M1–V304 are formyltransferase ArnAFT. The active-site Proton donor; for formyltransferase activity is the H104. (6R)-10-formyltetrahydrofolate is bound by residues R114 and V136–D140. Residues H314–N660 form a dehydrogenase ArnADH region. NAD(+)-binding positions include D347 and D368–I369. Residues A393, Y398, and T432–S433 each bind UDP-alpha-D-glucuronate. Catalysis depends on E434, which acts as the Proton acceptor; for decarboxylase activity. UDP-alpha-D-glucuronate contacts are provided by residues R460, N492, K526–R535, and Y613. The active-site Proton donor; for decarboxylase activity is the R619.

In the N-terminal section; belongs to the Fmt family. UDP-L-Ara4N formyltransferase subfamily. The protein in the C-terminal section; belongs to the NAD(P)-dependent epimerase/dehydratase family. UDP-glucuronic acid decarboxylase subfamily. Homohexamer, formed by a dimer of trimers.

The catalysed reaction is UDP-alpha-D-glucuronate + NAD(+) = UDP-beta-L-threo-pentopyranos-4-ulose + CO2 + NADH. It carries out the reaction UDP-4-amino-4-deoxy-beta-L-arabinose + (6R)-10-formyltetrahydrofolate = UDP-4-deoxy-4-formamido-beta-L-arabinose + (6S)-5,6,7,8-tetrahydrofolate + H(+). It functions in the pathway nucleotide-sugar biosynthesis; UDP-4-deoxy-4-formamido-beta-L-arabinose biosynthesis; UDP-4-deoxy-4-formamido-beta-L-arabinose from UDP-alpha-D-glucuronate: step 1/3. The protein operates within nucleotide-sugar biosynthesis; UDP-4-deoxy-4-formamido-beta-L-arabinose biosynthesis; UDP-4-deoxy-4-formamido-beta-L-arabinose from UDP-alpha-D-glucuronate: step 3/3. It participates in bacterial outer membrane biogenesis; lipopolysaccharide biosynthesis. Functionally, bifunctional enzyme that catalyzes the oxidative decarboxylation of UDP-glucuronic acid (UDP-GlcUA) to UDP-4-keto-arabinose (UDP-Ara4O) and the addition of a formyl group to UDP-4-amino-4-deoxy-L-arabinose (UDP-L-Ara4N) to form UDP-L-4-formamido-arabinose (UDP-L-Ara4FN). The modified arabinose is attached to lipid A and is required for resistance to polymyxin and cationic antimicrobial peptides. In Photorhabdus laumondii subsp. laumondii (strain DSM 15139 / CIP 105565 / TT01) (Photorhabdus luminescens subsp. laumondii), this protein is Bifunctional polymyxin resistance protein ArnA.